The primary structure comprises 51 residues: Glutamate dehydrogenase (51 aa).

K31 is a binding site for substrate.

It belongs to the Glu/Leu/Phe/Val dehydrogenases family. Homohexamer.

The protein localises to the mitochondrion matrix. It carries out the reaction L-glutamate + NAD(+) + H2O = 2-oxoglutarate + NH4(+) + NADH + H(+). The enzyme catalyses L-glutamate + NADP(+) + H2O = 2-oxoglutarate + NH4(+) + NADPH + H(+). In terms of biological role, mitochondrial glutamate dehydrogenase that converts L-glutamate into alpha-ketoglutarate. Plays a key role in glutamine anaplerosis by producing alpha-ketoglutarate, an important intermediate in the tricarboxylic acid cycle. The protein is Glutamate dehydrogenase of Electrophorus electricus (Electric eel).